The chain runs to 169 residues: Protein yop1 (169 aa).

Residues 1-35 are Cytoplasmic-facing; it reads MASFQDRAQHTIAQLDKELSKYPVLNNLERQTSVP. A helical transmembrane segment spans residues 36–55; the sequence is KVYVILGLVGIYTFLVFFNI. Position 56 (A56) is a topological domain, lumenal. A helical transmembrane segment spans residues 57–76; it reads GEFLVNFAGFLIPGYYSLNA. The Cytoplasmic segment spans residues 77–86; the sequence is LFTSGKADDT. A helical membrane pass occupies residues 87–103; it reads QWLTYWVVYALLTVVES. The Lumenal portion of the chain corresponds to 104 to 105; the sequence is AI. Residues 106 to 124 traverse the membrane as a helical segment; it reads NAAYWFPFYYIFKFVLILW. At 125–169 the chain is on the cytoplasmic side; sequence MSLPQTNGAQVVFHSFLQPVLGRFFTSGSTSANLRAQADAASKSQ.

This sequence belongs to the DP1 family. Oligomer.

It localises to the endoplasmic reticulum membrane. Its subcellular location is the golgi apparatus membrane. In terms of biological role, required to generate and maintain the structure of the tubular endoplasmic reticulum network and the vacuole. Induces high curvature in membranes and causes membrane tubule formation. Involved in membrane/vesicle trafficking. This chain is Protein yop1 (yop1), found in Aspergillus fumigatus (strain ATCC MYA-4609 / CBS 101355 / FGSC A1100 / Af293) (Neosartorya fumigata).